The following is a 452-amino-acid chain: Bifunctional protein GlmU (452 aa).

The interval 1-226 (MSLHIIILAA…LHEVEGVNNR (226 aa)) is pyrophosphorylase. UDP-N-acetyl-alpha-D-glucosamine-binding positions include 8 to 11 (LAAG), K22, Q73, 78 to 79 (GT), 100 to 102 (YGD), G136, E151, N166, and N224. D102 lines the Mg(2+) pocket. N224 contacts Mg(2+). A linker region spans residues 227–247 (IQLAALERAYQQQVAEELMLA). Residues 248 to 452 (GATLRDPARV…IDGWTRPVKK (205 aa)) are N-acetyltransferase. The UDP-N-acetyl-alpha-D-glucosamine site is built by R330 and K348. The Proton acceptor role is filled by H360. UDP-N-acetyl-alpha-D-glucosamine is bound by residues Y363 and N374. Acetyl-CoA-binding positions include A377, 383 to 384 (NY), S402, A420, and R437.

This sequence in the N-terminal section; belongs to the N-acetylglucosamine-1-phosphate uridyltransferase family. The protein in the C-terminal section; belongs to the transferase hexapeptide repeat family. Homotrimer. It depends on Mg(2+) as a cofactor.

Its subcellular location is the cytoplasm. It carries out the reaction alpha-D-glucosamine 1-phosphate + acetyl-CoA = N-acetyl-alpha-D-glucosamine 1-phosphate + CoA + H(+). The catalysed reaction is N-acetyl-alpha-D-glucosamine 1-phosphate + UTP + H(+) = UDP-N-acetyl-alpha-D-glucosamine + diphosphate. Its pathway is nucleotide-sugar biosynthesis; UDP-N-acetyl-alpha-D-glucosamine biosynthesis; N-acetyl-alpha-D-glucosamine 1-phosphate from alpha-D-glucosamine 6-phosphate (route II): step 2/2. It participates in nucleotide-sugar biosynthesis; UDP-N-acetyl-alpha-D-glucosamine biosynthesis; UDP-N-acetyl-alpha-D-glucosamine from N-acetyl-alpha-D-glucosamine 1-phosphate: step 1/1. It functions in the pathway bacterial outer membrane biogenesis; LPS lipid A biosynthesis. Its function is as follows. Catalyzes the last two sequential reactions in the de novo biosynthetic pathway for UDP-N-acetylglucosamine (UDP-GlcNAc). The C-terminal domain catalyzes the transfer of acetyl group from acetyl coenzyme A to glucosamine-1-phosphate (GlcN-1-P) to produce N-acetylglucosamine-1-phosphate (GlcNAc-1-P), which is converted into UDP-GlcNAc by the transfer of uridine 5-monophosphate (from uridine 5-triphosphate), a reaction catalyzed by the N-terminal domain. In Hahella chejuensis (strain KCTC 2396), this protein is Bifunctional protein GlmU.